A 1068-amino-acid polypeptide reads, in one-letter code: Carbamoyl phosphate synthase large chain (1068 aa).

A carboxyphosphate synthetic domain region spans residues 1–401; sequence MPRNNDIKKV…ALMKAIRSLE (401 aa). 12 residues coordinate ATP: Arg129, Arg169, Gly175, Gly176, Arg208, Ile210, Glu215, Gly241, Val242, His243, Gln284, and Glu298. The region spanning 133 to 327 is the ATP-grasp 1 domain; the sequence is KDTMEKIGEP…IAKVTAKIAL (195 aa). Positions 284, 298, and 300 each coordinate Mg(2+). Residues Gln284, Glu298, and Asn300 each contribute to the Mn(2+) site. The oligomerization domain stretch occupies residues 402-546; it reads QHVDSLMSYD…YSVFGSENEA (145 aa). The tract at residues 547–930 is carbamoyl phosphate synthetic domain; it reads AETNPQKKVL…ALYKAFEGAG (384 aa). Positions 672–862 constitute an ATP-grasp 2 domain; it reads DEILQKTGIP…IVDLAARIIM (191 aa). ATP-binding residues include Arg708, Lys747, Leu749, Glu753, Gly778, Val779, His780, Ser781, Gln821, and Glu833. Mg(2+)-binding residues include Gln821, Glu833, and Asn835. Residues Gln821, Glu833, and Asn835 each coordinate Mn(2+). The MGS-like domain maps to 931–1068; sequence VELPKYKQMI…PVDIATVKNL (138 aa). The interval 931 to 1068 is allosteric domain; the sequence is VELPKYKQMI…PVDIATVKNL (138 aa).

This sequence belongs to the CarB family. In terms of assembly, composed of two chains; the small (or glutamine) chain promotes the hydrolysis of glutamine to ammonia, which is used by the large (or ammonia) chain to synthesize carbamoyl phosphate. Tetramer of heterodimers (alpha,beta)4. Mg(2+) serves as cofactor. Requires Mn(2+) as cofactor.

The catalysed reaction is hydrogencarbonate + L-glutamine + 2 ATP + H2O = carbamoyl phosphate + L-glutamate + 2 ADP + phosphate + 2 H(+). It catalyses the reaction hydrogencarbonate + NH4(+) + 2 ATP = carbamoyl phosphate + 2 ADP + phosphate + 2 H(+). The protein operates within amino-acid biosynthesis; L-arginine biosynthesis; carbamoyl phosphate from bicarbonate: step 1/1. It participates in pyrimidine metabolism; UMP biosynthesis via de novo pathway; (S)-dihydroorotate from bicarbonate: step 1/3. Its function is as follows. Large subunit of the glutamine-dependent carbamoyl phosphate synthetase (CPSase). CPSase catalyzes the formation of carbamoyl phosphate from the ammonia moiety of glutamine, carbonate, and phosphate donated by ATP, constituting the first step of 2 biosynthetic pathways, one leading to arginine and/or urea and the other to pyrimidine nucleotides. The large subunit (synthetase) binds the substrates ammonia (free or transferred from glutamine from the small subunit), hydrogencarbonate and ATP and carries out an ATP-coupled ligase reaction, activating hydrogencarbonate by forming carboxy phosphate which reacts with ammonia to form carbamoyl phosphate. This Agathobacter rectalis (strain ATCC 33656 / DSM 3377 / JCM 17463 / KCTC 5835 / VPI 0990) (Eubacterium rectale) protein is Carbamoyl phosphate synthase large chain.